A 523-amino-acid chain; its full sequence is Asc-type amino acid transporter 1 (523 aa).

The disordered stretch occupies residues 1–28 (MAGHTQQPSGRGNPRPAPSPSPVPGTVP). Positions 15–25 (RPAPSPSPVPG) are enriched in pro residues. 9 helical membrane passes run 40–60 (IGLLSACTIIIGNIIGSGIFI), 72–92 (VGLALFVWVLGGGVTALGSLC), 113–133 (IFGGLAGFLLLWSAVLIMYPT), 268–288 (AIFISIPLVTFVYTFTNIAYF), 310–330 (LLGYFSWVMPVSVALSTFGGI), 362–382 (CTPIPALLVCCGATAVIMLVG), 388–408 (INYVSFINYLCYGVTILGLLL), 424–444 (LLIPVAYLVFWAFLLVFSFIS), and 448–468 (VCGVGVIIILTGVPIFFLGVF). A disordered region spans residues 499–523 (APEEEENGPCPPSLLPATDKPSKPQ).

The protein belongs to the amino acid-polyamine-organocation (APC) superfamily. As to quaternary structure, disulfide-linked heterodimer with the amino acid transport protein SLC3A2/4F2hc. As to expression, expressed in brain, heart, kidney, liver, lung, pancreas, placenta, and skeletal muscle.

Its subcellular location is the cell membrane. It carries out the reaction L-alanine(in) + glycine(out) = L-alanine(out) + glycine(in). The catalysed reaction is L-serine(out) + L-alanine(in) = L-serine(in) + L-alanine(out). The enzyme catalyses L-threonine(out) + L-alanine(in) = L-threonine(in) + L-alanine(out). It catalyses the reaction L-cysteine(out) + L-alanine(in) = L-cysteine(in) + L-alanine(out). It carries out the reaction 2-aminoisobutanoate(out) + L-alanine(in) = 2-aminoisobutanoate(in) + L-alanine(out). The catalysed reaction is D-serine(out) + L-alanine(in) = D-serine(in) + L-alanine(out). The enzyme catalyses D-alanine(out) + L-alanine(in) = D-alanine(in) + L-alanine(out). It catalyses the reaction L-valine(out) + L-alanine(in) = L-valine(in) + L-alanine(out). It carries out the reaction L-methionine(out) + L-alanine(in) = L-methionine(in) + L-alanine(out). The catalysed reaction is beta-alanine(out) + L-alanine(in) = beta-alanine(in) + L-alanine(out). The enzyme catalyses D-cysteine(out) + L-alanine(in) = D-cysteine(in) + L-alanine(out). It catalyses the reaction D-threonine(out) + L-alanine(in) = D-threonine(in) + L-alanine(out). It carries out the reaction D-isoleucine(out) + D-serine(in) = D-isoleucine(in) + D-serine(out). The catalysed reaction is D-serine(in) = D-serine(out). Associates with SLC3A2/4F2hc to form a functional heterodimeric complex that translocates small neutral L- and D-amino acids across the plasma membrane. Preferentially mediates exchange transport, but can also operate via facilitated diffusion. Acts as a major transporter for glycine, L- and D-serine in the central nervous system. At the spinal cord and brainstem regulates glycine metabolism and glycinergic inhibitory neurotransmission by providing for glycine de novo synthesis from L-serine and glycine recycling from astrocytes to glycinergic motor neurons. At Schaffer collateral-CA1 synapses mediates D-serine and glycine release that modulates post-synaptic activation of NMDA receptors and excitatory glutamatergic transmission. May regulate D-serine release from mesenchymal progenitors located in developing subcutaneous adipose tissue, favoring white adipocyte over thermogenic beige adipocyte lineage commitment. This is Asc-type amino acid transporter 1 (SLC7A10) from Homo sapiens (Human).